A 529-amino-acid chain; its full sequence is Bifunctional purine biosynthesis protein PurH (529 aa).

The region spanning 1 to 148 (MQQRRPVRRA…KNHKDVAIVV (148 aa)) is the MGS-like domain.

This sequence belongs to the PurH family.

It carries out the reaction (6R)-10-formyltetrahydrofolate + 5-amino-1-(5-phospho-beta-D-ribosyl)imidazole-4-carboxamide = 5-formamido-1-(5-phospho-D-ribosyl)imidazole-4-carboxamide + (6S)-5,6,7,8-tetrahydrofolate. It catalyses the reaction IMP + H2O = 5-formamido-1-(5-phospho-D-ribosyl)imidazole-4-carboxamide. The protein operates within purine metabolism; IMP biosynthesis via de novo pathway; 5-formamido-1-(5-phospho-D-ribosyl)imidazole-4-carboxamide from 5-amino-1-(5-phospho-D-ribosyl)imidazole-4-carboxamide (10-formyl THF route): step 1/1. Its pathway is purine metabolism; IMP biosynthesis via de novo pathway; IMP from 5-formamido-1-(5-phospho-D-ribosyl)imidazole-4-carboxamide: step 1/1. The chain is Bifunctional purine biosynthesis protein PurH from Salmonella newport (strain SL254).